The chain runs to 867 residues: Protein argonaute-3 (867 aa).

A necessary and sufficient for interaction with krimp region spans residues 1–83 (MSGRGNLLSL…IDTLKTDDHT (83 aa)). An interaction with papi region spans residues 1-289 (MSGRGNLLSL…CDVSHRILCQ (289 aa)). Residues arginine 4, arginine 68, and arginine 70 each carry the symmetric dimethylarginine modification. Residues 291–402 (TVLEMLVDLY…LIPELCYLTG (112 aa)) form the PAZ domain. The 288-residue stretch at 566 to 853 (MVVCICHNRR…LAYLIGQSIQ (288 aa)) folds into the Piwi domain.

The protein belongs to the argonaute family. Piwi subfamily. As to quaternary structure, component of the ping-pong piRNA processing (4P) complex consisting of krimp, aub and AGO3. Interacts (via N-terminus when not methylated on arginine residues) with krimp (via non-canonical tudor domain); this interaction leads to symmetrical dimethylation on AGO3 arginine residues and its subsequent dissociation from krimp. Krimp associated AGO3 is mostly free of piRNA binding and the interaction plays an important role in the loading of AGO3 with piRNAs; piRNA binding may stimulate dissociation of the two proteins. May form part of a piRNA processing complex consisting of tud, aub and AGO3. Interacts (when symmetrically dimethylated on arginine residues) with tud. Forms a complex with smg, twin, aub, nos mRNA and piRNAs that target the nos 3'-untranslated region, in early embryos. Interacts (via the N-terminal region when symmetrically methylated on arginine residues) with papi (via C-terminus); this interaction is RNA-independent and may be required for AGO3 localization to the nuage. Interacts with TER94 and tral. Symmetrically dimethylated on Arg-4, Arg-68 and Arg-70, most likely by csul/PRMT5/DART5. Methylation state probably functions as an indicator of its piRNA binding state. As to expression, in ovary, expressed in germline stem cells, germline cyst cells, nurse cells and oocytes during early stages. Also found in the somatic cap cells of the germarium. In testis, expressed in germline stem cells, primary gonial cells and early spermatocytes. No expression detected in the somatic hub cells at the apical tip of the testis (at protein level). Expressed in neurons throughout the adult brain and in the mushroom body subdivision in the peduncle. In the mushroom body, expressed only in gamma and core alpha-beta neurons.

The protein localises to the cytoplasm. Its subcellular location is the perinuclear region. It is found in the cytoplasmic ribonucleoprotein granule. Component of the perinuclear meiotic nuage, a germline-specific subcellular membraneless ribonucleoprotein compartment involved in production of transposable element-repressing Piwi-interacting RNA (piRNA)-induced silencing complexes (piRISCs), which are essential for maintaining germline integrity during oogenesis. Acts via the Piwi-interacting RNA (piRNA) metabolic process, which mediates the repression of transposable elements during meiosis by forming complexes composed of piRNAs and Piwi proteins and governs the methylation and subsequent repression of transposons. Piwi protein that directly binds piRNAs, a class of 24 to 30 nucleotide RNAs that are generated by a Dicer-independent mechanism and are primarily derived from transposons and other repeated sequence elements. Associates predominantly with sense piRNAs that contain adenine at nucleotide 10, but shows no preference for uridine at the 5' end. Shows RNA cleavage or slicer activity. Together with Piwi protein aub recruited to subregions of the perinuclear nuage by krimp, which coordinates their activity in the ping-pong amplification step of secondary piRNA biogenesis. Krimp recruits piRNA bound aub and unbound AGO3, bringing them into close proximity to facilitate the loading onto AGO3 of freshly cut piRNAs generated by aub cleavage of target sequences; krimp recognizes the piRNA loading state of the Piwi proteins via symmetrically dimethylated arginine modification in their N-terminus. Important for asymmetric ping-pong amplification to bias production towards antisense piRNAs capable of silencing transposable elements. In testis, associates with Su(Ste) and AT-chX-1 piRNAs mostly produced from antisense precursors. In the germline, acts to amplify pools of antisense piRNAs, among others Su(Ste), AT-chX-1 and roo, and to limit sense piRNA accumulation. Forms a complex with smg, twin, aub and specific piRNAs that targets nos mRNA (and probably other maternal mRNAS) for deadenylation promoting its decay during early embryogenesis. Involved in transposon silencing in the adult brain. The polypeptide is Protein argonaute-3 (Drosophila melanogaster (Fruit fly)).